A 287-amino-acid chain; its full sequence is Ribosomal RNA small subunit methyltransferase A (287 aa).

Asn-28, Leu-30, Gly-55, Glu-76, Asp-101, and Asn-125 together coordinate S-adenosyl-L-methionine.

The protein belongs to the class I-like SAM-binding methyltransferase superfamily. rRNA adenine N(6)-methyltransferase family. RsmA subfamily.

The protein resides in the cytoplasm. The catalysed reaction is adenosine(1518)/adenosine(1519) in 16S rRNA + 4 S-adenosyl-L-methionine = N(6)-dimethyladenosine(1518)/N(6)-dimethyladenosine(1519) in 16S rRNA + 4 S-adenosyl-L-homocysteine + 4 H(+). Its function is as follows. Specifically dimethylates two adjacent adenosines (A1518 and A1519) in the loop of a conserved hairpin near the 3'-end of 16S rRNA in the 30S particle. May play a critical role in biogenesis of 30S subunits. In Alkaliphilus oremlandii (strain OhILAs) (Clostridium oremlandii (strain OhILAs)), this protein is Ribosomal RNA small subunit methyltransferase A.